A 789-amino-acid chain; its full sequence is UPF0313 protein VC_1711 (789 aa).

The region spanning 363–642 (AYDMIKTSVN…KALLRYHDPA (280 aa)) is the Radical SAM core domain. Residues cysteine 377, cysteine 381, and cysteine 384 each coordinate [4Fe-4S] cluster. The interval 669–789 (PEKDSDLVTP…NTQRQPQRAR (121 aa)) is disordered. A compositionally biased stretch (basic residues) spans 683 to 698 (KSGRHGANRFATKHTH). Polar residues-rich tracts occupy residues 716-726 (RPNSGNKSNQG), 733-763 (PTGS…QRGS), and 778-789 (RGNTQRQPQRAR).

Belongs to the UPF0313 family. Requires [4Fe-4S] cluster as cofactor.

This Vibrio cholerae serotype O1 (strain ATCC 39315 / El Tor Inaba N16961) protein is UPF0313 protein VC_1711.